The following is a 335-amino-acid chain: Capsular polysaccharide phosphotransferase WcwK (335 aa).

This sequence belongs to the stealth family.

This chain is Capsular polysaccharide phosphotransferase WcwK (wcwK), found in Streptococcus pneumoniae.